The sequence spans 821 residues: Protein SCAR1 (821 aa).

Disordered regions lie at residues 168–189, 205–289, and 577–625; these read KRAS…QRGR, TCTS…RGSS, and TSLP…RESK. The segment covering 206 to 225 has biased composition (polar residues); the sequence is CTSLSFSGRTSTSKTASTIE. Residues 226 to 250 are compositionally biased toward basic and acidic residues; it reads IESKSDLQEHRSFSFDSRSGGEKPK. Residues 252–265 are compositionally biased toward polar residues; the sequence is VSSSSRFTPGSRTI. Residues 592-612 show a composition bias toward low complexity; that stretch reads SSSYISDNSDNDNRSVSMSEQ. The WH2 domain occupies 756-774; that stretch reads EAGDFLHQIRTKQFNLRRV. The disordered stretch occupies residues 802-821; sequence QAVASDDGEGESDTWSDSDT. Acidic residues predominate over residues 807 to 821; the sequence is DDGEGESDTWSDSDT.

This sequence belongs to the SCAR/WAVE family. As to quaternary structure, binds BRK1 and actin. Interacts with SPK1, ABI1 and ABI2. In terms of tissue distribution, expressed in expanding cotyledons, expanding leaves and expanding siliques containing developing embryos. Detected in unopened flower buds and in the expanding tip region of roots. Reduced expression in mature leaves and mature cotyledons.

It localises to the cytoplasm. The protein resides in the cytoskeleton. Functionally, involved in regulation of actin and microtubule organization. Part of a WAVE complex that activates the Arp2/3 complex. Regulates trichome branch positioning and expansion. The protein is Protein SCAR1 (SCAR1) of Arabidopsis thaliana (Mouse-ear cress).